We begin with the raw amino-acid sequence, 263 residues long: Small ribosomal subunit protein bS1c (263 aa).

3 S1 motif domains span residues 27 to 96, 114 to 178, and 192 to 260; these read GDIV…LSIR, DSLL…LSHR, and GNII…LSMK.

Belongs to the bacterial ribosomal protein bS1 family.

Its subcellular location is the plastid. It localises to the chloroplast. The protein is Small ribosomal subunit protein bS1c (rps1) of Pyropia yezoensis (Susabi-nori).